The following is an 893-amino-acid chain: POU domain protein 2, isoform B (893 aa).

Residues 586–668 (QMKQQQREDP…STPKPTSGLT (83 aa)) form a disordered region. The span at 602-617 (PLAKSPLRSPSLSPVP) shows a compositional bias: low complexity. Residues 623–646 (QQRTPPNSMTANSLGMSSAVMTPN) are compositionally biased toward polar residues. The span at 647–665 (TPSMQQQPQLQQSTPKPTS) shows a compositional bias: low complexity. Residues 681-755 (EETTDLEELE…LLQKWLEDAD (75 aa)) form the POU-specific domain. Positions 786–845 (RRKKRTSIETTVRTTLEKAFLMNCKPTSEEISQLSERLNMDKEVIRVWFCNRRQKEKRIN) form a DNA-binding region, homeobox.

Belongs to the POU transcription factor family. Class-2 subfamily. Initial expression in cellular blastoderm stage, then in ectodermal stripes during germband extension. Broad expression in the neuroectoderm followed by limitation to discrete subsets of CNS cells, and expression in specific PNS neurons and support cells.

Its subcellular location is the nucleus. Functionally, DNA-binding regulatory protein implicated in early development. Involved in neuronal cell fate decision. May act as an octamer-dependent activator of transcription. Could also play an early role in specific ectodermal cells, and a subsequent role in the embryonic nervous system. The protein is POU domain protein 2, isoform B of Drosophila melanogaster (Fruit fly).